Here is a 330-residue protein sequence, read N- to C-terminus: Ketol-acid reductoisomerase (NADP(+)) (330 aa).

The KARI N-terminal Rossmann domain occupies 1-181 (MKVYYEQDAT…GGARSGVIET (181 aa)). Residues 24–27 (YGSQ), Arg-47, and 82–85 (DQVQ) contribute to the NADP(+) site. The active site involves His-107. Gly-133 is an NADP(+) binding site. Positions 182–327 (TFKEETETDL…GKLRGMMPWL (146 aa)) constitute a KARI C-terminal knotted domain. Positions 190, 194, 226, and 230 each coordinate Mg(2+). Residue Ser-251 participates in substrate binding.

Belongs to the ketol-acid reductoisomerase family. Mg(2+) serves as cofactor.

It carries out the reaction (2R)-2,3-dihydroxy-3-methylbutanoate + NADP(+) = (2S)-2-acetolactate + NADPH + H(+). The catalysed reaction is (2R,3R)-2,3-dihydroxy-3-methylpentanoate + NADP(+) = (S)-2-ethyl-2-hydroxy-3-oxobutanoate + NADPH + H(+). Its pathway is amino-acid biosynthesis; L-isoleucine biosynthesis; L-isoleucine from 2-oxobutanoate: step 2/4. It functions in the pathway amino-acid biosynthesis; L-valine biosynthesis; L-valine from pyruvate: step 2/4. Functionally, involved in the biosynthesis of branched-chain amino acids (BCAA). Catalyzes an alkyl-migration followed by a ketol-acid reduction of (S)-2-acetolactate (S2AL) to yield (R)-2,3-dihydroxy-isovalerate. In the isomerase reaction, S2AL is rearranged via a Mg-dependent methyl migration to produce 3-hydroxy-3-methyl-2-ketobutyrate (HMKB). In the reductase reaction, this 2-ketoacid undergoes a metal-dependent reduction by NADPH to yield (R)-2,3-dihydroxy-isovalerate. This is Ketol-acid reductoisomerase (NADP(+)) from Nitratidesulfovibrio vulgaris (strain DSM 19637 / Miyazaki F) (Desulfovibrio vulgaris).